We begin with the raw amino-acid sequence, 483 residues long: UDP-glucosyl transferase 73B2 (483 aa).

The Proton acceptor role is filled by His22. His22 is an an anthocyanidin binding site. Asp133 serves as the catalytic Charge relay. UDP-alpha-D-glucose contacts are provided by Ala355, Gln357, His372, Trp375, Asn376, Ser377, and Glu380. Ala395 is a binding site for an anthocyanidin. UDP-alpha-D-glucose is bound by residues Glu396 and Gln397.

This sequence belongs to the UDP-glycosyltransferase family. In terms of tissue distribution, expressed in roots and flowers.

The enzyme catalyses a 7-O-hydroxy-flavonol + UDP-alpha-D-glucose = a flavonol 7-O-beta-D-glucoside + UDP + H(+). Its pathway is secondary metabolite biosynthesis; flavonoid biosynthesis. In terms of biological role, catalyzes the glycosylation of flavonoids from UDP-glucose. Uses a wide range of flavonoid substrates including flavonols (quercetin, kaempferol, isorhamnetin, 3-OH 7,2',4'-MeO-flavone), flavones (luteolin, apigenin), flavanones (naringenin, hesperetin), flavanonols (taxifolin), isoflavones (genistein, daidzein), flavonol glycosides (quercitrin, isoquercitrin, rutin), and chalcones (isoliquiritigenin). Specific for the C-7 position, with a 20-fold lower activity for the C-3 position. This chain is UDP-glucosyl transferase 73B2 (UGT73B2), found in Arabidopsis thaliana (Mouse-ear cress).